Here is a 155-residue protein sequence, read N- to C-terminus: Small ribosomal subunit protein uS7 (155 aa).

Belongs to the universal ribosomal protein uS7 family. As to quaternary structure, part of the 30S ribosomal subunit. Contacts proteins S9 and S11.

One of the primary rRNA binding proteins, it binds directly to 16S rRNA where it nucleates assembly of the head domain of the 30S subunit. Is located at the subunit interface close to the decoding center, probably blocks exit of the E-site tRNA. The polypeptide is Small ribosomal subunit protein uS7 (Fervidobacterium nodosum (strain ATCC 35602 / DSM 5306 / Rt17-B1)).